The chain runs to 441 residues: Acetyltransferase TRI7 (441 aa).

7 helical membrane-spanning segments follow: residues 14-34, 75-95, 158-178, 306-326, 336-356, 377-397, and 421-441; these read GILYYTSTLLAVCTYAALIII, SLTLALTALFILQCCNFLVLT, IWFILRQSLIVAWQCLLLDII, IAFVFLGSAVVHMAIDSFCWG, LAFFGSLVVGIIIEDTIQALC, LVGYIWVSFWFMMTSPWYLYH, and TATMLLFGSGVILKFAIGIEV.

The protein belongs to the wax synthase family.

The protein resides in the membrane. Its pathway is sesquiterpene biosynthesis; trichothecene biosynthesis. Functionally, acetyltransferase; part of the core gene cluster that mediates the biosynthesis of trichothecenes, a very large family of chemically related bicyclic sesquiterpene compounds acting as mycotoxins, including T2-toxin. The biosynthesis of trichothecenes begins with the cyclization of farnesyl diphosphate to trichodiene and is catalyzed by the trichodiene synthase TRI5. Trichodiene undergoes a series of oxygenations catalyzed by the cytochrome P450 monooxygenase TRI4. TRI4 controls the addition of four oxygens at C-2, C-3, C-11, and the C-12, C-13-epoxide to form the intermediate isotrichotriol. Isotrichotriol then undergoes a non-enzymatic isomerization and cyclization to form isotrichodermol. During this process, the oxygen at the C-2 position becomes the pyran ring oxygen and the hydroxyl group at C-11 is lost. More complex type A trichothecenes are built by modifying isotrichodermol through a series of paired hydroxylation and acetylation or acylation steps. Isotrichodermol is converted to isotrichodermin by the acetyltransferase TRI101. TRI101 encodes a C-3 transacetylase that acts as a self-protection or resistance factor during biosynthesis and that the presence of a free C-3 hydroxyl group is a key component of Fusarium trichothecene phytotoxicity. A second hydroxyl group is added to C-15 by the trichothecene C-15 hydroxylase TRI11, producing 15-decalonectrin, which is then acetylated by TRI3, producing calonectrin. A third hydroxyl group is added at C-4 by the cytochrome P450 monooxygenase TRI13, converting calonectrin to 3,15-diacetoxyspirpenol, which is subsequently acetylated by the acetyltransferase TRI7. A fourth hydroxyl group is added to C-8 by the cytochrome P450 monooxygenase TRI1, followed by the addition of an isovaleryl moiety by TRI16. Finally, the acetyl group is removed from the C-3 position by the trichothecene C-3 esterase TRI8 to produce T-2 toxin. In Fusarium sporotrichioides, this protein is Acetyltransferase TRI7.